The following is a 540-amino-acid chain: Glucose-6-phosphate isomerase (540 aa).

The active-site Proton donor is the Glu350. Active-site residues include His381 and Lys503.

It belongs to the GPI family.

Its subcellular location is the cytoplasm. It carries out the reaction alpha-D-glucose 6-phosphate = beta-D-fructose 6-phosphate. The protein operates within carbohydrate biosynthesis; gluconeogenesis. Its pathway is carbohydrate degradation; glycolysis; D-glyceraldehyde 3-phosphate and glycerone phosphate from D-glucose: step 2/4. Its function is as follows. Catalyzes the reversible isomerization of glucose-6-phosphate to fructose-6-phosphate. The protein is Glucose-6-phosphate isomerase of Burkholderia ambifaria (strain MC40-6).